A 352-amino-acid chain; its full sequence is Photosystem II D2 protein (352 aa).

Thr-2 bears the N-acetylthreonine mark. Thr-2 is subject to Phosphothreonine. The helical transmembrane segment at 40 to 60 (CAYFAVGGWLTGTTFVTSWYT) threads the bilayer. Position 117 (His-117) interacts with chlorophyll a. A helical membrane pass occupies residues 124–140 (GFMLRQFEIARAIGLRP). Positions 129 and 142 each coordinate pheophytin a. The chain crosses the membrane as a helical span at residues 152–165 (VFVSVFLIYPLGQS). His-197 contacts chlorophyll a. The chain crosses the membrane as a helical span at residues 207 to 227 (AALLCAIHGATVENTLFEDGD). A plastoquinone contacts are provided by His-214 and Phe-261. Residue His-214 coordinates Fe cation. His-268 contacts Fe cation. A helical transmembrane segment spans residues 278–294 (GLWMSAIGVVGLALNLR).

It belongs to the reaction center PufL/M/PsbA/D family. PSII is composed of 1 copy each of membrane proteins PsbA, PsbB, PsbC, PsbD, PsbE, PsbF, PsbH, PsbI, PsbJ, PsbK, PsbL, PsbM, PsbT, PsbX, PsbY, PsbZ, Psb30/Ycf12, at least 3 peripheral proteins of the oxygen-evolving complex and a large number of cofactors. It forms dimeric complexes. The D1/D2 heterodimer binds P680, chlorophylls that are the primary electron donor of PSII, and subsequent electron acceptors. It shares a non-heme iron and each subunit binds pheophytin, quinone, additional chlorophylls, carotenoids and lipids. There is also a Cl(-1) ion associated with D1 and D2, which is required for oxygen evolution. The PSII complex binds additional chlorophylls, carotenoids and specific lipids. is required as a cofactor.

The protein resides in the plastid. It is found in the chloroplast thylakoid membrane. It catalyses the reaction 2 a plastoquinone + 4 hnu + 2 H2O = 2 a plastoquinol + O2. Functionally, photosystem II (PSII) is a light-driven water:plastoquinone oxidoreductase that uses light energy to abstract electrons from H(2)O, generating O(2) and a proton gradient subsequently used for ATP formation. It consists of a core antenna complex that captures photons, and an electron transfer chain that converts photonic excitation into a charge separation. The D1/D2 (PsbA/PsbD) reaction center heterodimer binds P680, the primary electron donor of PSII as well as several subsequent electron acceptors. D2 is needed for assembly of a stable PSII complex. The polypeptide is Photosystem II D2 protein (Nephroselmis olivacea (Green alga)).